The following is a 498-amino-acid chain: Protein disulfide-isomerase (498 aa).

The N-terminal stretch at 1–23 is a signal peptide; the sequence is MASFRGSIWYCIFVLSLIAVAIS. Thioredoxin domains lie at 24-143 and 339-484; these read AAES…KQSG and YLKA…KNRD. Asn-41 is a glycosylation site (N-linked (GlcNAc...) asparagine). Active-site nucleophile residues include Cys-61, Cys-64, Cys-406, and Cys-409. Intrachain disulfides connect Cys-61–Cys-64 and Cys-406–Cys-409. Residues 495–498 carry the Prevents secretion from ER motif; that stretch reads KDEL.

This sequence belongs to the protein disulfide isomerase family.

Its subcellular location is the endoplasmic reticulum lumen. It catalyses the reaction Catalyzes the rearrangement of -S-S- bonds in proteins.. Participates in the folding of proteins containing disulfide bonds, may be involved in glycosylation, prolyl hydroxylation and triglyceride transfer. This chain is Protein disulfide-isomerase, found in Ricinus communis (Castor bean).